The primary structure comprises 40 residues: Photosystem II reaction center protein J (40 aa).

A helical membrane pass occupies residues 8-28 (IPLWIIGTVAGIVVIGLIGLF).

This sequence belongs to the PsbJ family. In terms of assembly, PSII is composed of 1 copy each of membrane proteins PsbA, PsbB, PsbC, PsbD, PsbE, PsbF, PsbH, PsbI, PsbJ, PsbK, PsbL, PsbM, PsbT, PsbX, PsbY, PsbZ, Psb30/Ycf12, at least 3 peripheral proteins of the oxygen-evolving complex and a large number of cofactors. It forms dimeric complexes.

The protein localises to the plastid. It localises to the chloroplast thylakoid membrane. One of the components of the core complex of photosystem II (PSII). PSII is a light-driven water:plastoquinone oxidoreductase that uses light energy to abstract electrons from H(2)O, generating O(2) and a proton gradient subsequently used for ATP formation. It consists of a core antenna complex that captures photons, and an electron transfer chain that converts photonic excitation into a charge separation. The sequence is that of Photosystem II reaction center protein J from Pisum sativum (Garden pea).